We begin with the raw amino-acid sequence, 119 residues long: MLPARNRMTRSTEFDATVKHGTRMAQPDIVVHLRRGSEPDDESAGPRVGLVVGKAVGTAVQRHRVARRLRHVARPLLGELQPSDRLVIRALPGSRTVSSARLAQELQRCLRRMPAGSGR.

Belongs to the RnpA family. Consists of a catalytic RNA component (M1 or rnpB) and a protein subunit.

It carries out the reaction Endonucleolytic cleavage of RNA, removing 5'-extranucleotides from tRNA precursor.. Its function is as follows. RNaseP catalyzes the removal of the 5'-leader sequence from pre-tRNA to produce the mature 5'-terminus. It can also cleave other RNA substrates such as 4.5S RNA. The protein component plays an auxiliary but essential role in vivo by binding to the 5'-leader sequence and broadening the substrate specificity of the ribozyme. This Mycolicibacterium paratuberculosis (strain ATCC BAA-968 / K-10) (Mycobacterium paratuberculosis) protein is Ribonuclease P protein component.